The following is an 81-amino-acid chain: Acyl carrier protein (81 aa).

The Carrier domain occupies 2-80 (ASKDEILAGL…DAVNFIDNAQ (79 aa)). S40 is subject to O-(pantetheine 4'-phosphoryl)serine.

Belongs to the acyl carrier protein (ACP) family. Post-translationally, 4'-phosphopantetheine is transferred from CoA to a specific serine of apo-ACP by AcpS. This modification is essential for activity because fatty acids are bound in thioester linkage to the sulfhydryl of the prosthetic group.

It localises to the cytoplasm. It participates in lipid metabolism; fatty acid biosynthesis. Its function is as follows. Carrier of the growing fatty acid chain in fatty acid biosynthesis. This chain is Acyl carrier protein, found in Kocuria rhizophila (strain ATCC 9341 / DSM 348 / NBRC 103217 / DC2201).